Here is a 1026-residue protein sequence, read N- to C-terminus: Multidrug resistance protein MdtC (1026 aa).

A run of 11 helical transmembrane segments spans residues 15-35, 333-353, 360-380, 387-407, 431-451, 463-483, 528-548, 853-873, 897-917, 953-973, and 984-1004; these read ILIA…LPVA, EVEE…FLFL, LIPA…MYLC, LSLM…IVVL, VGFT…PLLL, FAVT…TLTP, LVGV…IAIP, LILI…LYES, LFNA…IGIV, PIMM…LSGG, and ITIV…TPVV.

It belongs to the resistance-nodulation-cell division (RND) (TC 2.A.6) family. MdtC subfamily. In terms of assembly, part of a tripartite efflux system composed of MdtA, MdtB and MdtC. MdtC forms a heteromultimer with MdtB.

It localises to the cell inner membrane. In Salmonella schwarzengrund (strain CVM19633), this protein is Multidrug resistance protein MdtC.